Reading from the N-terminus, the 109-residue chain is uncharacterized protein (109 aa).

The protein resides in the mitochondrion. This is an uncharacterized protein from Saccharomyces cerevisiae (strain ATCC 204508 / S288c) (Baker's yeast).